The chain runs to 94 residues: Integration host factor subunit beta (94 aa).

It belongs to the bacterial histone-like protein family. Heterodimer of an alpha and a beta chain.

This protein is one of the two subunits of integration host factor, a specific DNA-binding protein that functions in genetic recombination as well as in transcriptional and translational control. The chain is Integration host factor subunit beta from Brucella melitensis biotype 2 (strain ATCC 23457).